The primary structure comprises 294 residues: Acetylglutamate kinase (294 aa).

Substrate contacts are provided by residues glycine 69–glycine 70, arginine 91, and asparagine 190.

It belongs to the acetylglutamate kinase family. ArgB subfamily.

Its subcellular location is the cytoplasm. It catalyses the reaction N-acetyl-L-glutamate + ATP = N-acetyl-L-glutamyl 5-phosphate + ADP. Its pathway is amino-acid biosynthesis; L-arginine biosynthesis; N(2)-acetyl-L-ornithine from L-glutamate: step 2/4. In terms of biological role, catalyzes the ATP-dependent phosphorylation of N-acetyl-L-glutamate. The chain is Acetylglutamate kinase from Mycobacterium bovis (strain ATCC BAA-935 / AF2122/97).